The sequence spans 231 residues: 7-cyano-7-deazaguanine synthase (231 aa).

8-18 (FSGGQDSTTCL) is an ATP binding site. Zn(2+) is bound by residues cysteine 188, cysteine 197, cysteine 200, and cysteine 203.

Belongs to the QueC family. It depends on Zn(2+) as a cofactor.

It carries out the reaction 7-carboxy-7-deazaguanine + NH4(+) + ATP = 7-cyano-7-deazaguanine + ADP + phosphate + H2O + H(+). It participates in purine metabolism; 7-cyano-7-deazaguanine biosynthesis. Its function is as follows. Catalyzes the ATP-dependent conversion of 7-carboxy-7-deazaguanine (CDG) to 7-cyano-7-deazaguanine (preQ(0)). The chain is 7-cyano-7-deazaguanine synthase from Salmonella gallinarum (strain 287/91 / NCTC 13346).